The sequence spans 451 residues: Probable D-serine dehydratase (451 aa).

Residues 1–55 are disordered; sequence MPGRTRPSCRLAITFTPRPDSATPRAGRAAPATGRRSNRSRSTLSATASPMPRRP. Residues 22–35 show a composition bias toward low complexity; it reads ATPRAGRAAPATGR. The residue at position 118 (lysine 118) is an N6-(pyridoxal phosphate)lysine.

This sequence belongs to the serine/threonine dehydratase family. DsdA subfamily. The cofactor is pyridoxal 5'-phosphate.

The catalysed reaction is D-serine = pyruvate + NH4(+). The protein is Probable D-serine dehydratase of Paracidovorax citrulli (strain AAC00-1) (Acidovorax citrulli).